A 263-amino-acid chain; its full sequence is Rano class II histocompatibility antigen, B-1 beta chain (263 aa).

The signal sequence occupies residues 1–27 (MALQTPSFLLPAAVVVLMVLSSPGTEG). The segment at 28–120 (RDSPRDFVYQ…SEVRTSLRRL (93 aa)) is beta-1. Residues 28 to 224 (RDSPRDFVYQ…RAQSESAQSK (197 aa)) lie on the Extracellular side of the membrane. Intrachain disulfides connect Cys-42-Cys-104 and Cys-143-Cys-199. An N-linked (GlcNAc...) asparagine glycan is attached at Asn-46. Residues 121–214 (EQPNVAISLS…SLESPVTVEW (94 aa)) form a beta-2 region. One can recognise an Ig-like C1-type domain in the interval 123 to 211 (PNVAISLSRT…DHPSLESPVT (89 aa)). The tract at residues 215 to 224 (RAQSESAQSK) is connecting peptide. Residues 225 to 245 (MLSGIGGFVLGVIFLGLGLFI) form a helical membrane-spanning segment. Residues 246–263 (RHKRQKGPRGPPPAGLLQ) lie on the Cytoplasmic side of the membrane. Residue Lys-251 forms a Glycyl lysine isopeptide (Lys-Gly) (interchain with G-Cter in ubiquitin) linkage.

It belongs to the MHC class II family.

It localises to the membrane. In terms of biological role, involved in the presentation of foreign antigens to the immune system. This Rattus norvegicus (Rat) protein is Rano class II histocompatibility antigen, B-1 beta chain (RT1-Bb).